The primary structure comprises 436 residues: Gustatory receptor for sugar taste 61a (436 aa).

The Cytoplasmic portion of the chain corresponds to 1-78 (MSRTSDDIRK…PQDVKFKVRS (78 aa)). Residues 79-99 (IGLAVTGLFLLLGGMKTLVGA) traverse the membrane as a helical segment. Topologically, residues 100–111 (NILFTEGLNAKN) are extracellular. The chain crosses the membrane as a helical span at residues 112 to 132 (IVGLVFLIVGMVNWLNFVGFA). The Cytoplasmic portion of the chain corresponds to 133–164 (RSWSHIMLPWSSVDILMLFPPYKRGKRSLRSK). A helical membrane pass occupies residues 165 to 185 (VNVLALSVVVLAVGDHMLYYA). Residues 186 to 214 (SGYCSYSMHILQCHTNHSRITFGLYLEKE) are Extracellular-facing. Asn-201 carries N-linked (GlcNAc...) asparagine glycosylation. The helical transmembrane segment at 215–235 (FSDIMFIMPFNIFSMCYGFWL) threads the bilayer. The Cytoplasmic portion of the chain corresponds to 236–237 (NG). The helical transmembrane segment at 238–258 (AFTFLWNFMDIFIVMTSIGLA) threads the bilayer. At 259–304 (QRFQQFAARVGALEGRHVPEALWYDIRRDHIRLCELASLVEASMSN) the chain is on the extracellular side. Residues 305-325 (IVFVSCANNVYVICNQALAIF) form a helical membrane-spanning segment. At 326–334 (TKLRHPINY) the chain is on the cytoplasmic side. A helical membrane pass occupies residues 335 to 355 (VYFWYSLIFLLARTSLVFMTA). The Extracellular segment spans residues 356 to 436 (SKIHDASLLP…AKSHKGLRCA (81 aa)).

This sequence belongs to the insect chemoreceptor superfamily. Gustatory receptor (GR) family. Gr5a subfamily. Expressed in sweet sensing neurons of classical chemosensory sensilla, but also in two supersensitive neurons of atypical taste sensilla.

The protein localises to the cell membrane. One of the few identified sugar gustatory receptors identified so far with glucose being its primary ligand and which mediates acceptance behavior. This is Gustatory receptor for sugar taste 61a (Gr61a) from Drosophila melanogaster (Fruit fly).